We begin with the raw amino-acid sequence, 797 residues long: LPS-assembly protein LptD (797 aa).

An N-terminal signal peptide occupies residues M1–A20. The interval S23–P45 is disordered.

The protein belongs to the LptD family. As to quaternary structure, component of the lipopolysaccharide transport and assembly complex. Interacts with LptE and LptA.

Its subcellular location is the cell outer membrane. Together with LptE, is involved in the assembly of lipopolysaccharide (LPS) at the surface of the outer membrane. The sequence is that of LPS-assembly protein LptD from Bordetella avium (strain 197N).